The sequence spans 502 residues: Adenylate cyclase (502 aa).

The Cytoplasmic segment spans residues 1 to 25 (MGDFCRRVDCKAMKFFALRSSIRTQ). Residues 26 to 46 (IMASTTLLILALIGAIVTVWA) form a helical membrane-spanning segment. Topologically, residues 47 to 203 (KSESTLYHQE…RKVNLAVTNA (157 aa)) are lumenal, thylakoid. A helical transmembrane segment spans residues 204–226 (VNQALVVGFAGLNIGWICAYFLA). The region spanning 227 to 280 (QHLSDPVRRLQISVAKIAGGDLQHRADIHSRADEIGALATSVNEMSAALQISFN) is the HAMP domain. The Cytoplasmic portion of the chain corresponds to 227–502 (QHLSDPVRRL…EAISIYEVKA (276 aa)). The region spanning 320 to 451 (TILFCDIRGY…DAVNVASRIE (132 aa)) is the Guanylate cyclase domain. Mg(2+) contacts are provided by aspartate 325 and aspartate 369.

The protein belongs to the adenylyl cyclase class-3 family. Requires Mg(2+) as cofactor.

It is found in the cellular thylakoid membrane. The enzyme catalyses ATP = 3',5'-cyclic AMP + diphosphate. Functionally, may function as a membrane-localized receptor protein. The polypeptide is Adenylate cyclase (cya) (Anabaena cylindrica).